The sequence spans 292 residues: Proteasome subunit beta (292 aa).

Residues 1–62 (MSESLGSVPG…HRAADDIPHG (62 aa)) constitute a propeptide, removed in mature form; by autocatalysis. Threonine 63 functions as the Nucleophile in the catalytic mechanism.

It belongs to the peptidase T1B family. In terms of assembly, the 20S proteasome core is composed of 14 alpha and 14 beta subunits that assemble into four stacked heptameric rings, resulting in a barrel-shaped structure. The two inner rings, each composed of seven catalytic beta subunits, are sandwiched by two outer rings, each composed of seven alpha subunits. The catalytic chamber with the active sites is on the inside of the barrel. Has a gated structure, the ends of the cylinder being occluded by the N-termini of the alpha-subunits. Is capped by the proteasome-associated ATPase, ARC.

The protein localises to the cytoplasm. It catalyses the reaction Cleavage of peptide bonds with very broad specificity.. It functions in the pathway protein degradation; proteasomal Pup-dependent pathway. Its activity is regulated as follows. The formation of the proteasomal ATPase ARC-20S proteasome complex, likely via the docking of the C-termini of ARC into the intersubunit pockets in the alpha-rings, may trigger opening of the gate for substrate entry. Interconversion between the open-gate and close-gate conformations leads to a dynamic regulation of the 20S proteasome proteolysis activity. In terms of biological role, component of the proteasome core, a large protease complex with broad specificity involved in protein degradation. This Gordonia bronchialis (strain ATCC 25592 / DSM 43247 / BCRC 13721 / JCM 3198 / KCTC 3076 / NBRC 16047 / NCTC 10667) (Rhodococcus bronchialis) protein is Proteasome subunit beta.